Reading from the N-terminus, the 422-residue chain is MVSKDSGRCILTTPEREVEPAACLALEMRYALDPNRQIKKRNKALQVRFKDICEAQNEQRDTQLSSGPLGEKREAKAVSCRVAYRKYMTVPARRSIPNVTKSTGVQTSPDLRKCYQTFPLDRKKGSLKGLPAADAFKSQNNGFLADSKEKSEAGPMEEPRPCSAGRIHKTTALVFHSNEHVNALGQPSGVNCAELCKSPDVLGYPEAVLQNSRPPSEEPIHQLQGRAKLDRGTLDSEEPAPLTHGRVFKTEVATVYPPAISTRAPEPGLSNSAAASQWSLCPADEEQRRAAHLNGLQASTGSAVACSTPVQYLSPECSEQPLQNQPSPTAGIGDEEHQQIVPHTEVVDLKAQLQVMENLISSSQETIKVLLGVIQELEKGEAHREGLSYRTGQDTANCDTCRNSACIIYRYVNILFPLCYSE.

Residues 143–163 (FLADSKEKSEAGPMEEPRPCS) are disordered. Residues 146–160 (DSKEKSEAGPMEEPR) are compositionally biased toward basic and acidic residues. Phosphoserine is present on S177. A coiled-coil region spans residues 344–370 (TEVVDLKAQLQVMENLISSSQETIKVL).

The protein belongs to the INSYN2 family. As to quaternary structure, interacts with GPHN.

It localises to the postsynaptic density. Its function is as follows. Component of the protein machinery at the inhibitory synapses, probably acting as a scaffold. Inhibitory synapses dampen neuronal activity through postsynaptic hyperpolarization. This synaptic inhibition is fundamental for the functioning of the central nervous system, shaping and orchestrating the flow of information through neuronal networks to generate a precise neural code. This is Inhibitory synaptic factor 2A from Mus musculus (Mouse).